A 155-amino-acid chain; its full sequence is Protein-export protein SecB 1 (155 aa).

This sequence belongs to the SecB family. Homotetramer, a dimer of dimers. One homotetramer interacts with 1 SecA dimer.

It is found in the cytoplasm. Functionally, one of the proteins required for the normal export of preproteins out of the cell cytoplasm. It is a molecular chaperone that binds to a subset of precursor proteins, maintaining them in a translocation-competent state. It also specifically binds to its receptor SecA. This is Protein-export protein SecB 1 from Polaromonas naphthalenivorans (strain CJ2).